The following is a 221-amino-acid chain: Oxaloacetate tautomerase FAHD1, mitochondrial (221 aa).

A mitochondrion-targeting transit peptide spans 1 to 24 (MASTKPLSRFWEWGKNIVCVGRNY). S37 bears the Phosphoserine mark. Mg(2+) is bound by residues E68, E70, and D99. Residue K110 is modified to N6-acetyllysine. Residue K112 is modified to N6-succinyllysine.

The protein belongs to the FAH family. Homodimer. The cofactor is Mg(2+). Requires Mn(2+) as cofactor.

It is found in the mitochondrion. It localises to the cytoplasm. The protein localises to the cytosol. It carries out the reaction oxaloacetate = enol-oxaloacetate. The enzyme catalyses oxaloacetate + H(+) = pyruvate + CO2. It catalyses the reaction a 3-acylpyruvate + H2O = a carboxylate + pyruvate + H(+). The catalysed reaction is acetylpyruvate + H2O = acetate + pyruvate + H(+). It carries out the reaction 3-fumarylpyruvate + H2O = fumarate + pyruvate + H(+). With respect to regulation, oxaloacetate decarboxylation is competitively inhibited by oxalate. In terms of biological role, tautomerase that converts enol-oxaloacetate, a strong inhibitor of succinate dehydrogenase, to the physiological keto form of oxaloacetate. It is thereby required to maximize aerobic respiration efficiency by preventing succinate dehydrogenase inhibition. Also acts as a weak oxaloacetate decarboxylase (ODx), catalyzing the decarboxylation of oxaloacetate (OAA) to pyruvate and CO(2), and as such is likely a regulatory enzyme in the TCA cycle. Also displays acylpyruvase activity, being able to hydrolyze acetylpyruvate and fumarylpyruvate in vitro. This chain is Oxaloacetate tautomerase FAHD1, mitochondrial, found in Rattus norvegicus (Rat).